A 320-amino-acid polypeptide reads, in one-letter code: Olfactory receptor 10J1 (320 aa).

Residues 1 to 36 (MLLCFRFGNQSMKRENFTLITDFVFQGFSSFHEQQI) lie on the Extracellular side of the membrane. 2 N-linked (GlcNAc...) asparagine glycosylation sites follow: Asn9 and Asn16. A helical transmembrane segment spans residues 37 to 57 (TLFGVFLALYILTLAGNIIIV). Over 58-65 (TIIRMDLH) the chain is Cytoplasmic. A helical membrane pass occupies residues 66 to 86 (LHTPMYFFLSMLSTSETVYTL). The Extracellular segment spans residues 87–110 (VILPRMLSSLVGMSQPISLAGCAT). Cys108 and Cys199 are disulfide-bonded. The helical transmembrane segment at 111-131 (QMFFFVTFGITNCFLLTAMGY) threads the bilayer. Residues 132–150 (DRYVAICNPLRYMVIMNKR) lie on the Cytoplasmic side of the membrane. Residues 151–171 (LRIQLVLGACSIGLIVAITQV) form a helical membrane-spanning segment. The Extracellular segment spans residues 172–207 (TSVFRLPFCARKVPHFFCDIRPVMKLSCIDTTVNEI). Residues 208–227 (LTLIISVLVLVVPMGLVFIS) traverse the membrane as a helical segment. At 228–247 (YVLIISTILKIASVEGRKKA) the chain is on the cytoplasmic side. Residues 248–268 (FATCASHLTVVIVHYSCASIA) form a helical membrane-spanning segment. Residues 269-281 (YLKPKSENTREHD) are Extracellular-facing. A helical transmembrane segment spans residues 282–302 (QLISVTYTVITPLLNPVVYTL). Over 303-320 (RNKEVKDALCRAVGGKFS) the chain is Cytoplasmic.

The protein belongs to the G-protein coupled receptor 1 family.

Its subcellular location is the cell membrane. Its function is as follows. Odorant receptor. This Homo sapiens (Human) protein is Olfactory receptor 10J1 (OR10J1).